Consider the following 396-residue polypeptide: Phosphoglycerate kinase (396 aa).

Residues 21-23 (DFN), R36, 59-62 (HLGK), R119, and R156 contribute to the substrate site. Residues K206, E325, and 352–355 (GGDS) contribute to the ATP site.

It belongs to the phosphoglycerate kinase family. As to quaternary structure, monomer.

It is found in the cytoplasm. The catalysed reaction is (2R)-3-phosphoglycerate + ATP = (2R)-3-phospho-glyceroyl phosphate + ADP. It participates in carbohydrate degradation; glycolysis; pyruvate from D-glyceraldehyde 3-phosphate: step 2/5. In Staphylococcus carnosus (strain TM300), this protein is Phosphoglycerate kinase.